The chain runs to 361 residues: Peptide chain release factor 1 (361 aa).

Glutamine 235 is modified (N5-methylglutamine).

Belongs to the prokaryotic/mitochondrial release factor family. Methylated by PrmC. Methylation increases the termination efficiency of RF1.

It is found in the cytoplasm. In terms of biological role, peptide chain release factor 1 directs the termination of translation in response to the peptide chain termination codons UAG and UAA. This chain is Peptide chain release factor 1, found in Xanthomonas oryzae pv. oryzae (strain MAFF 311018).